We begin with the raw amino-acid sequence, 180 residues long: NAD(P)H-quinone oxidoreductase subunit I, chloroplastic (180 aa).

2 consecutive 4Fe-4S ferredoxin-type domains span residues 55–84 (GRIH…VDWR) and 95–124 (LNYS…MTEE). Residues C64, C67, C70, C74, C104, C107, C110, and C114 each contribute to the [4Fe-4S] cluster site.

The protein belongs to the complex I 23 kDa subunit family. In terms of assembly, NDH is composed of at least 16 different subunits, 5 of which are encoded in the nucleus. Requires [4Fe-4S] cluster as cofactor.

The protein localises to the plastid. It localises to the chloroplast thylakoid membrane. It catalyses the reaction a plastoquinone + NADH + (n+1) H(+)(in) = a plastoquinol + NAD(+) + n H(+)(out). The catalysed reaction is a plastoquinone + NADPH + (n+1) H(+)(in) = a plastoquinol + NADP(+) + n H(+)(out). In terms of biological role, NDH shuttles electrons from NAD(P)H:plastoquinone, via FMN and iron-sulfur (Fe-S) centers, to quinones in the photosynthetic chain and possibly in a chloroplast respiratory chain. The immediate electron acceptor for the enzyme in this species is believed to be plastoquinone. Couples the redox reaction to proton translocation, and thus conserves the redox energy in a proton gradient. The protein is NAD(P)H-quinone oxidoreductase subunit I, chloroplastic of Dioscorea elephantipes (Elephant's foot yam).